Reading from the N-terminus, the 818-residue chain is Structure-specific endonuclease subunit SLX4 (818 aa).

5 disordered regions span residues 1–39, 53–151, 279–324, 413–437, and 587–712; these read MSFL…PSAS, RDPY…SSSN, FSEG…HQDS, NAQF…KTSK, and MLPA…MASE. The segment covering 28-39 has biased composition (low complexity); sequence VIDSSPSVPSAS. Over residues 90-103 the composition is skewed to basic and acidic residues; sequence PSERTKDAHGKDRF. Residues 306-316 show a composition bias toward low complexity; the sequence is TTSTTITSLST. A compositionally biased stretch (polar residues) spans 426–437; the sequence is TRSPCSNPKTSK. Basic and acidic residues predominate over residues 604-618; sequence QMSKRDTIKSRDIRA. Polar residues-rich tracts occupy residues 621–640, 652–672, and 696–712; these read SRSN…QNTG, SSKS…TQSV, and SLAS…MASE.

This sequence belongs to the SLX4 family. Forms a heterodimer with SLX1. Post-translationally, phosphorylated in response to DNA damage.

The protein resides in the nucleus. Its function is as follows. Regulatory subunit of the SLX1-SLX4 structure-specific endonuclease that resolves DNA secondary structures generated during DNA repair and recombination. Has endonuclease activity towards branched DNA substrates, introducing single-strand cuts in duplex DNA close to junctions with ss-DNA. This is Structure-specific endonuclease subunit SLX4 from Uncinocarpus reesii (strain UAMH 1704).